Here is a 105-residue protein sequence, read N- to C-terminus: Met repressor (105 aa).

This sequence belongs to the MetJ family. Homodimer.

The protein resides in the cytoplasm. In terms of biological role, this regulatory protein, when combined with SAM (S-adenosylmethionine) represses the expression of the methionine regulon and of enzymes involved in SAM synthesis. The sequence is that of Met repressor from Glaesserella parasuis serovar 5 (strain SH0165) (Haemophilus parasuis).